The chain runs to 99 residues: Large ribosomal subunit protein eL30 (99 aa).

It belongs to the eukaryotic ribosomal protein eL30 family.

The protein is Large ribosomal subunit protein eL30 (rpl30e) of Pyrococcus horikoshii (strain ATCC 700860 / DSM 12428 / JCM 9974 / NBRC 100139 / OT-3).